The chain runs to 63 residues: Large ribosomal subunit protein uL29 (63 aa).

Belongs to the universal ribosomal protein uL29 family.

In Aggregatibacter actinomycetemcomitans (Actinobacillus actinomycetemcomitans), this protein is Large ribosomal subunit protein uL29 (rpmC).